The chain runs to 519 residues: Methionine--tRNA ligase (519 aa).

The short motif at 11-21 (AYPNAAPHVGH) is the 'HIGH' region element. A 'KMSKS' region motif is present at residues 299–303 (KMSKS). K302 provides a ligand contact to ATP. The interval 500–519 (LPPPTGVFPRYQPPQPPEGK) is disordered.

It belongs to the class-I aminoacyl-tRNA synthetase family. MetG type 2B subfamily. As to quaternary structure, monomer.

Its subcellular location is the cytoplasm. The catalysed reaction is tRNA(Met) + L-methionine + ATP = L-methionyl-tRNA(Met) + AMP + diphosphate. Functionally, is required not only for elongation of protein synthesis but also for the initiation of all mRNA translation through initiator tRNA(fMet) aminoacylation. This is Methionine--tRNA ligase from Mycobacterium tuberculosis (strain ATCC 25618 / H37Rv).